We begin with the raw amino-acid sequence, 79 residues long: CDC42 small effector protein 1 (79 aa).

Residues cysteine 10 and cysteine 11 are each lipidated (S-palmitoyl cysteine). In terms of domain architecture, CRIB spans 30-43 (IGEPMNFVHLTHIG). The segment at 48–79 (GAGDGLAMTGAVQEQMRSKGNRDRPWSNSRAL) is disordered. Positions 63 to 72 (MRSKGNRDRP) are enriched in basic and acidic residues.

Belongs to the CDC42SE/SPEC family. In terms of assembly, interacts with CDC42 (in GTP-bound form). Interacts weakly with RAC1 and not at all with RHOA.

It localises to the cytoplasm. The protein resides in the cytoskeleton. The protein localises to the cell membrane. Probably involved in the organization of the actin cytoskeleton by acting downstream of CDC42, inducing actin filament assembly. Alters CDC42-induced cell shape changes. In activated T-cells, may play a role in CDC42-mediated F-actin accumulation at the immunological synapse. May play a role in early contractile events in phagocytosis in macrophages. This chain is CDC42 small effector protein 1 (Cdc42se1), found in Rattus norvegicus (Rat).